An 877-amino-acid polypeptide reads, in one-letter code: Alanine--tRNA ligase (877 aa).

Residues His567, His571, Cys669, and His673 each coordinate Zn(2+).

The protein belongs to the class-II aminoacyl-tRNA synthetase family. Requires Zn(2+) as cofactor.

It is found in the cytoplasm. The catalysed reaction is tRNA(Ala) + L-alanine + ATP = L-alanyl-tRNA(Ala) + AMP + diphosphate. Catalyzes the attachment of alanine to tRNA(Ala) in a two-step reaction: alanine is first activated by ATP to form Ala-AMP and then transferred to the acceptor end of tRNA(Ala). Also edits incorrectly charged Ser-tRNA(Ala) and Gly-tRNA(Ala) via its editing domain. This chain is Alanine--tRNA ligase, found in Rickettsia typhi (strain ATCC VR-144 / Wilmington).